Consider the following 182-residue polypeptide: Ribulose bisphosphate carboxylase small subunit, chloroplastic 4 (182 aa).

The N-terminal 41 residues, 1–41 (MAATMMNKTVVLSKGCTKPSAVPKVSINRKGFLNTAMNKKR), are a transit peptide targeting the chloroplast.

The protein belongs to the RuBisCO small chain family. Heterohexadecamer of 8 large and 8 small subunits.

The protein resides in the plastid. It localises to the chloroplast. In terms of biological role, ruBisCO catalyzes two reactions: the carboxylation of D-ribulose 1,5-bisphosphate, the primary event in carbon dioxide fixation, as well as the oxidative fragmentation of the pentose substrate. Both reactions occur simultaneously and in competition at the same active site. Although the small subunit is not catalytic it is essential for maximal activity. This chain is Ribulose bisphosphate carboxylase small subunit, chloroplastic 4, found in Acetabularia peniculus (Green alga).